A 546-amino-acid chain; its full sequence is Major facilitator superfamily transporter MPN_077 (546 aa).

12 helical membrane passes run 2-22, 62-82, 88-108, 179-199, 220-240, 248-268, 305-325, 344-364, 377-397, 401-421, 442-462, and 485-505; these read WGLVLLGYVLFVIEWFVIDFI, WTITLLRAVGSILCGVMVVKF, VMIMMGLMCVCFPFLIIGSPL, AFFIIFRSTIAIGGTTLIAYA, FWGFNVGLVIVAAPFLIPGVG, VWVVTFMILLVFAMLLVFAWF, LLAIAGVGTILLINPLTQTWF, PILLILWVMGYLLGYFLLSPF, FIFTANAVLVLLIVIFAATLG, VVGFTFVGIFTFIAGGFGWSL, IIFGYVWGFAYVFYSIFDIIT, and IAAIVLFVSLLLVINWVIIYL.

It belongs to the major facilitator superfamily.

It is found in the cell membrane. The sequence is that of Major facilitator superfamily transporter MPN_077 from Mycoplasma pneumoniae (strain ATCC 29342 / M129 / Subtype 1) (Mycoplasmoides pneumoniae).